Here is a 117-residue protein sequence, read N- to C-terminus: Large ribosomal subunit protein bL20c (117 aa).

It belongs to the bacterial ribosomal protein bL20 family.

The protein resides in the plastid. It is found in the chloroplast. Binds directly to 23S ribosomal RNA and is necessary for the in vitro assembly process of the 50S ribosomal subunit. It is not involved in the protein synthesizing functions of that subunit. The sequence is that of Large ribosomal subunit protein bL20c from Lobularia maritima (Sweet alyssum).